A 183-amino-acid polypeptide reads, in one-letter code: uncharacterized protein (183 aa).

This sequence belongs to the herpesviridae US1 family.

This is an uncharacterized protein from Human cytomegalovirus (strain AD169) (HHV-5).